We begin with the raw amino-acid sequence, 189 residues long: Riboflavin kinase (189 aa).

Residues threonine 42 and asparagine 44 each coordinate Mg(2+). The Nucleophile role is filled by glutamate 124.

It belongs to the flavokinase family. Zn(2+) is required as a cofactor. Requires Mg(2+) as cofactor.

The enzyme catalyses riboflavin + ATP = FMN + ADP + H(+). Its pathway is cofactor biosynthesis; FMN biosynthesis; FMN from riboflavin (ATP route): step 1/1. Its function is as follows. Catalyzes the phosphorylation of riboflavin (vitamin B2) to form flavin mononucleotide (FMN) coenzyme. In Candida glabrata (strain ATCC 2001 / BCRC 20586 / JCM 3761 / NBRC 0622 / NRRL Y-65 / CBS 138) (Yeast), this protein is Riboflavin kinase (FMN1).